The sequence spans 218 residues: Small ribosomal subunit protein uS3c (218 aa).

Positions 47–118 (VQKNIRISSG…KLNIAITRIS (72 aa)) constitute a KH type-2 domain.

It belongs to the universal ribosomal protein uS3 family. Part of the 30S ribosomal subunit.

Its subcellular location is the plastid. It localises to the chloroplast. This chain is Small ribosomal subunit protein uS3c (rps3), found in Crucihimalaya wallichii (Rock-cress).